The chain runs to 480 residues: Glutamate--tRNA ligase (480 aa).

The short motif at Pro-21–Gly-31 is the 'HIGH' region element. The Zn(2+) site is built by Cys-110, Cys-112, Cys-137, and His-139. Residues Lys-248–Arg-252 carry the 'KMSKS' region motif. An ATP-binding site is contributed by Lys-251.

Belongs to the class-I aminoacyl-tRNA synthetase family. Glutamate--tRNA ligase type 1 subfamily. As to quaternary structure, monomer. Zn(2+) is required as a cofactor.

Its subcellular location is the cytoplasm. It catalyses the reaction tRNA(Glu) + L-glutamate + ATP = L-glutamyl-tRNA(Glu) + AMP + diphosphate. In terms of biological role, catalyzes the attachment of glutamate to tRNA(Glu) in a two-step reaction: glutamate is first activated by ATP to form Glu-AMP and then transferred to the acceptor end of tRNA(Glu). The sequence is that of Glutamate--tRNA ligase from Haemophilus influenzae (strain PittEE).